A 392-amino-acid chain; its full sequence is MRRIVCPPVLFLSASLLTGCDFSGIFASIQSEVPLKIPSIRGVVTGLVKCNNKLYACAGQLWEKDASKSEGKWTAVNFLPGKKITSIVSKGACVYACVSGEGVYTYTSNGAGRTGGTTTPSTVLGKTNGAIRIGGSDNPFLQMPCELSSGSSGGGGGGSGSSSDGGIKNGSDENVLGSGTGYVVTTKAVYTKSNSSGTSCTYTKDGTFTATTSPILGCTSDGKGCFYVLDGTDVHCRTVQASGGGNGAHCAVASGSATSCKVAHTVTNPLCIAHVKNGQTEFLLIGGSQGYKEIKLETGSGSGTGCLKAENVRGPEQWGEDSVTPKDRVSQYEGTIGRFAISDIYTVESTSGAGGTNGGTNKPDVYVVVGDSQDGYTGLWRFDAQKKEWNRE.

The signal sequence occupies residues 1–19; sequence MRRIVCPPVLFLSASLLTG. The N-palmitoyl cysteine moiety is linked to residue Cys20. Residue Cys20 is the site of S-diacylglycerol cysteine attachment. A disordered region spans residues 148–173; sequence SSGSSGGGGGGSGSSSDGGIKNGSDE. A compositionally biased stretch (gly residues) spans 151–160; that stretch reads SSGGGGGGSG.

The protein belongs to the TP013X lipoprotein family.

It localises to the cell membrane. This is an uncharacterized protein from Treponema pallidum (strain Nichols).